Reading from the N-terminus, the 1275-residue chain is Myosin-1 (1275 aa).

The Myosin motor domain occupies 35-727 (VGVSDLTLLS…TLFAMEDMRD (693 aa)). 128-135 (GESGAGKT) contacts ATP. Ser361 is subject to Phosphoserine. The interval 410–493 (TIGILDIYGF…PGLFAALNDS (84 aa)) is actin-binding. 2 consecutive IQ domains span residues 731 to 751 (HNMA…KEDA) and 752 to 777 (ARLI…YGNG). Positions 785 to 974 (RRRMSMLGSR…KSGTVSVRPG (190 aa)) constitute a TH1 domain. 4 disordered regions span residues 966–1064 (SGTV…LNNN), 1089–1128 (QNHN…AKPK), 1183–1230 (SECP…GGLS), and 1251–1275 (IADA…DDDW). The segment covering 977-992 (PDSQNPKRPRATSSKV) has biased composition (polar residues). Residues 1095–1106 (PTAPSRPAKKAA) are compositionally biased toward low complexity. Residues 1107–1121 (PAPPVKKTAPPPPPS) are compositionally biased toward pro residues. An SH3 domain is found at 1127–1187 (PKWPTFKANY…PTAYISECPP (61 aa)). Positions 1254–1263 (ALKKRSATRD) are enriched in basic and acidic residues. A compositionally biased stretch (acidic residues) spans 1264–1275 (SDDEEEDDDDDW).

This sequence belongs to the TRAFAC class myosin-kinesin ATPase superfamily. Myosin family. Phosphorylation of the TEDS site (Ser-361) is required for the polarization of the actin cytoskeleton. Phosphorylation probably activates the myosin-I ATPase activity.

The protein localises to the cytoplasm. The protein resides in the cytoskeleton. It is found in the actin patch. In terms of biological role, type-I myosin implicated in the organization of the actin cytoskeleton. Required for proper actin cytoskeleton polarization. At the cell cortex, assembles in patch-like structures together with proteins from the actin-polymerizing machinery and promotes actin assembly. Functions as actin nucleation-promoting factor (NPF) for the Arp2/3 complex. This is Myosin-1 (MYO1) from Meyerozyma guilliermondii (strain ATCC 6260 / CBS 566 / DSM 6381 / JCM 1539 / NBRC 10279 / NRRL Y-324) (Yeast).